The primary structure comprises 1097 residues: Platelet-derived growth factor receptor beta (1097 aa).

Residues 1–31 form the signal peptide; the sequence is MGLPEVMPASVLRGQLLLFVLLLLGPQISQG. 3 Ig-like C2-type domains span residues 32–119, 128–209, and 213–308; these read LVIT…YIFV, PMDS…YSLQ, and INVS…INVT. At 32 to 531 the chain is on the extracellular side; it reads LVITPPGPEF…VVPHSLPFKV (500 aa). N-linked (GlcNAc...) asparagine glycosylation is found at asparagine 44, asparagine 88, and asparagine 102. A disulfide bond links cysteine 53 and cysteine 99. A disulfide bridge links cysteine 148 with cysteine 189. N-linked (GlcNAc...) asparagine glycosylation occurs at asparagine 214. Cysteine 234 and cysteine 290 are disulfide-bonded. Residues asparagine 291, asparagine 306, asparagine 353, asparagine 370, asparagine 444, asparagine 467, and asparagine 478 are each glycosylated (N-linked (GlcNAc...) asparagine). Residues 415–523 form the Ig-like C2-type 4 domain; sequence PVRVLELSES…GRDSQEVTVV (109 aa). The cysteines at positions 435 and 507 are disulfide-linked. The helical transmembrane segment at 532-552 threads the bilayer; the sequence is VVISAILALVVLTVISLIILI. Topologically, residues 553 to 1097 are cytoplasmic; the sequence is MLWQRKPRYE…PLAEAEDSFL (545 aa). Phosphotyrosine; by autocatalysis occurs at positions 561, 578, and 580. Positions 599–961 constitute a Protein kinase domain; that stretch reads LVLGRTLGSG…QLVLLLERLL (363 aa). ATP is bound by residues 605 to 613 and lysine 633; that span reads LGSGAFGQV. Position 685 is a phosphotyrosine; by ABL1 and ABL2 (tyrosine 685). Tyrosine 715, tyrosine 739, tyrosine 750, tyrosine 762, tyrosine 770, tyrosine 774, and tyrosine 777 each carry phosphotyrosine; by autocatalysis. Aspartate 825 functions as the Proton acceptor in the catalytic mechanism. Residue tyrosine 856 is modified to Phosphotyrosine; by autocatalysis. Phosphotyrosine; by ABL1 and ABL2 occurs at positions 933 and 969. A phosphotyrosine; by autocatalysis mark is found at tyrosine 1008 and tyrosine 1020. The tract at residues 1016 to 1097 is disordered; sequence TDNDYIIPLP…PLAEAEDSFL (82 aa). The segment covering 1042-1059 has biased composition (polar residues); it reads SLASSTLNEVNTSSTISC. The segment covering 1072-1081 has biased composition (low complexity); it reads EPEAQLEQPQ.

It belongs to the protein kinase superfamily. Tyr protein kinase family. CSF-1/PDGF receptor subfamily. As to quaternary structure, interacts with homodimeric PDGFB and PDGFD, and with heterodimers formed by PDGFA and PDGFB. May also interact with homodimeric PDGFC. Monomer in the absence of bound ligand. Interaction with homodimeric PDGFB, heterodimers formed by PDGFA and PDGFB or homodimeric PDGFD, leads to receptor dimerization, where both PDGFRA homodimers and heterodimers with PDGFRB are observed. Interacts with SH2B2/APS. Interacts directly (tyrosine phosphorylated) with SHB. Interacts (tyrosine phosphorylated) with PIK3R1 and RASA1. Interacts (tyrosine phosphorylated) with CBL. Interacts (tyrosine phosphorylated) with SRC and SRC family kinases. Interacts (tyrosine phosphorylated) with PIK3C2B, maybe indirectly. Interacts (tyrosine phosphorylated) with SHC1, GRB7, GRB10 and NCK1. Interaction with GRB2 is mediated by SHC1. Interacts (via C-terminus) with NHERF1. N-glycosylated. In terms of processing, ubiquitinated. After autophosphorylation, the receptor is polyubiquitinated, leading to its degradation. Post-translationally, autophosphorylated on tyrosine residues upon ligand binding. Autophosphorylation occurs in trans, i.e. one subunit of the dimeric receptor phosphorylates tyrosine residues on the other subunit. Phosphorylation at Tyr-578, and to a lesser degree, Tyr-580 is important for interaction with SRC. Phosphorylation at Tyr-715 is important for interaction with GRB2. Phosphorylation at Tyr-739 and Tyr-750 is important for interaction with PIK3R1. Phosphorylation at Tyr-750 is important for interaction with NCK1. Phosphorylation at Tyr-770 and Tyr-856 is important for interaction with RASA1/GAP. Phosphorylation at Tyr-856 is important for efficient phosphorylation of PLCG1 and PTPN11, resulting in increased phosphorylation of AKT1, MAPK1/ERK2 and/or MAPK3/ERK1, PDCD6IP/ALIX and STAM, and in increased cell proliferation. Phosphorylation at Tyr-1008 is important for interaction with PTPN11. Phosphorylation at Tyr-1008 and Tyr-1020 is important for interaction with PLCG1. Dephosphorylated by PTPRJ at Tyr-750, Tyr-856, Tyr-1008 and Tyr-1020. Dephosphorylated by PTPN2 at Tyr-578 and Tyr-1020.

The protein localises to the cell membrane. It localises to the cytoplasmic vesicle. Its subcellular location is the lysosome lumen. It catalyses the reaction L-tyrosyl-[protein] + ATP = O-phospho-L-tyrosyl-[protein] + ADP + H(+). Present in an inactive conformation in the absence of bound ligand. Binding of PDGFB and/or PDGFD leads to dimerization and activation by autophosphorylation on tyrosine residues. In terms of biological role, tyrosine-protein kinase that acts as a cell-surface receptor for homodimeric PDGFB and PDGFD and for heterodimers formed by PDGFA and PDGFB, and plays an essential role in the regulation of embryonic development, cell proliferation, survival, differentiation, chemotaxis and migration. Plays an essential role in blood vessel development by promoting proliferation, migration and recruitment of pericytes and smooth muscle cells to endothelial cells. Plays a role in the migration of vascular smooth muscle cells and the formation of neointima at vascular injury sites. Required for normal development of the cardiovascular system. Required for normal recruitment of pericytes (mesangial cells) in the kidney glomerulus, and for normal formation of a branched network of capillaries in kidney glomeruli. Promotes rearrangement of the actin cytoskeleton and the formation of membrane ruffles. Binding of its cognate ligands - homodimeric PDGFB, heterodimers formed by PDGFA and PDGFB or homodimeric PDGFD -leads to the activation of several signaling cascades; the response depends on the nature of the bound ligand and is modulated by the formation of heterodimers between PDGFRA and PDGFRB. Phosphorylates PLCG1, PIK3R1, PTPN11, RASA1/GAP, CBL, SHC1 and NCK1. Activation of PLCG1 leads to the production of the cellular signaling molecules diacylglycerol and inositol 1,4,5-trisphosphate, mobilization of cytosolic Ca(2+) and the activation of protein kinase C. Phosphorylation of PIK3R1, the regulatory subunit of phosphatidylinositol 3-kinase, leads to the activation of the AKT1 signaling pathway. Phosphorylation of SHC1, or of the C-terminus of PTPN11, creates a binding site for GRB2, resulting in the activation of HRAS, RAF1 and down-stream MAP kinases, including MAPK1/ERK2 and/or MAPK3/ERK1. Promotes phosphorylation and activation of SRC family kinases. Promotes phosphorylation of PDCD6IP/ALIX and STAM. Receptor signaling is down-regulated by protein phosphatases that dephosphorylate the receptor and its down-stream effectors, and by rapid internalization of the activated receptor. This Rattus norvegicus (Rat) protein is Platelet-derived growth factor receptor beta (Pdgfrb).